The sequence spans 401 residues: Acetate kinase (401 aa).

Position 10 (N10) interacts with Mg(2+). Residue K17 coordinates ATP. Residue R91 participates in substrate binding. D150 functions as the Proton donor/acceptor in the catalytic mechanism. Residues 210-214, 285-287, and 333-337 contribute to the ATP site; these read HLGNG, DCR, and GIGEN. E387 contacts Mg(2+).

It belongs to the acetokinase family. In terms of assembly, homodimer. The cofactor is Mg(2+). Requires Mn(2+) as cofactor.

It localises to the cytoplasm. The catalysed reaction is acetate + ATP = acetyl phosphate + ADP. Its pathway is metabolic intermediate biosynthesis; acetyl-CoA biosynthesis; acetyl-CoA from acetate: step 1/2. Catalyzes the formation of acetyl phosphate from acetate and ATP. Can also catalyze the reverse reaction. This is Acetate kinase from Pasteurella multocida (strain Pm70).